We begin with the raw amino-acid sequence, 477 residues long: Cysteine--tRNA ligase (477 aa).

Cys29 provides a ligand contact to Zn(2+). Residues 31-41 (PTVYNYFHVGN) carry the 'HIGH' region motif. Zn(2+) is bound by residues Cys209, His234, and Glu238. The 'KMSKS' region motif lies at 267 to 271 (KMSKS). Residue Lys270 coordinates ATP.

This sequence belongs to the class-I aminoacyl-tRNA synthetase family. Monomer. Zn(2+) serves as cofactor.

It localises to the cytoplasm. The catalysed reaction is tRNA(Cys) + L-cysteine + ATP = L-cysteinyl-tRNA(Cys) + AMP + diphosphate. The chain is Cysteine--tRNA ligase from Desulfitobacterium hafniense (strain DSM 10664 / DCB-2).